Consider the following 219-residue polypeptide: Leucyl/phenylalanyl-tRNA--protein transferase (219 aa).

It belongs to the L/F-transferase family.

The protein resides in the cytoplasm. It carries out the reaction N-terminal L-lysyl-[protein] + L-leucyl-tRNA(Leu) = N-terminal L-leucyl-L-lysyl-[protein] + tRNA(Leu) + H(+). The enzyme catalyses N-terminal L-arginyl-[protein] + L-leucyl-tRNA(Leu) = N-terminal L-leucyl-L-arginyl-[protein] + tRNA(Leu) + H(+). It catalyses the reaction L-phenylalanyl-tRNA(Phe) + an N-terminal L-alpha-aminoacyl-[protein] = an N-terminal L-phenylalanyl-L-alpha-aminoacyl-[protein] + tRNA(Phe). Its function is as follows. Functions in the N-end rule pathway of protein degradation where it conjugates Leu, Phe and, less efficiently, Met from aminoacyl-tRNAs to the N-termini of proteins containing an N-terminal arginine or lysine. This is Leucyl/phenylalanyl-tRNA--protein transferase from Leptospira borgpetersenii serovar Hardjo-bovis (strain JB197).